Consider the following 260-residue polypeptide: POLG alternative reading frame (260 aa).

Disordered regions lie at residues 1–50 and 108–219; these read MEPK…LRPR and ARRG…RRGG. Low complexity-rich tracts occupy residues 36–48, 116–154, and 164–186; these read AGSS…LQLR, GRGA…GQPG, and AEPA…EAPG. Residues 104–130 form a required for nucleolar localization region; it reads ANLRARRGDAWRGRGAPQRRAPAEARA. Composition is skewed to gly residues over residues 187–199 and 209–219; these read LGLG…VRPR and RGAGPGVRRGG.

In terms of assembly, interacts with C1QBP; the interaction results in nucleolar localization of C1QBP, probably due to prevention of C1QBP maturation and redirection from mitochondria to nucleoli. Post-translationally, undergoes proteolytic cleavage to produce a secreted C-terminal fragment.

The protein resides in the nucleus. Its subcellular location is the nucleolus. The protein localises to the secreted. This is POLG alternative reading frame from Homo sapiens (Human).